The sequence spans 659 residues: Threonine--tRNA ligase (659 aa).

The region spanning 3–64 (EKIRITLIDN…LEDGRLEIIT (62 aa)) is the TGS domain. Residues 249-555 (DHRRLGQEMD…LIEHHAGRFP (307 aa)) form a catalytic region. Residues C354, H405, and H532 each coordinate Zn(2+).

The protein belongs to the class-II aminoacyl-tRNA synthetase family. In terms of assembly, homodimer. Zn(2+) is required as a cofactor.

The protein resides in the cytoplasm. The catalysed reaction is tRNA(Thr) + L-threonine + ATP = L-threonyl-tRNA(Thr) + AMP + diphosphate + H(+). Its function is as follows. Catalyzes the attachment of threonine to tRNA(Thr) in a two-step reaction: L-threonine is first activated by ATP to form Thr-AMP and then transferred to the acceptor end of tRNA(Thr). Also edits incorrectly charged L-seryl-tRNA(Thr). The chain is Threonine--tRNA ligase from Zymomonas mobilis subsp. mobilis (strain ATCC 31821 / ZM4 / CP4).